Reading from the N-terminus, the 148-residue chain is Lysozyme C (148 aa).

A signal peptide spans 1-18; sequence MKALIVLGLVLLSVMVQG. The C-type lysozyme domain maps to 19–148; the sequence is KVFERCELAR…VRQYVQGCGV (130 aa). 4 disulfides stabilise this stretch: Cys-24–Cys-146, Cys-48–Cys-134, Cys-83–Cys-99, and Cys-95–Cys-113. Catalysis depends on residues Glu-53 and Asp-71.

This sequence belongs to the glycosyl hydrolase 22 family. As to quaternary structure, monomer.

The catalysed reaction is Hydrolysis of (1-&gt;4)-beta-linkages between N-acetylmuramic acid and N-acetyl-D-glucosamine residues in a peptidoglycan and between N-acetyl-D-glucosamine residues in chitodextrins.. In terms of biological role, lysozymes have primarily a bacteriolytic function; those in tissues and body fluids are associated with the monocyte-macrophage system and enhance the activity of immunoagents. In Gorilla gorilla gorilla (Western lowland gorilla), this protein is Lysozyme C (LYZ).